Consider the following 348-residue polypeptide: Phosphoribosylformylglycinamidine cyclo-ligase (348 aa).

The protein belongs to the AIR synthase family.

The protein localises to the cytoplasm. It carries out the reaction 2-formamido-N(1)-(5-O-phospho-beta-D-ribosyl)acetamidine + ATP = 5-amino-1-(5-phospho-beta-D-ribosyl)imidazole + ADP + phosphate + H(+). Its pathway is purine metabolism; IMP biosynthesis via de novo pathway; 5-amino-1-(5-phospho-D-ribosyl)imidazole from N(2)-formyl-N(1)-(5-phospho-D-ribosyl)glycinamide: step 2/2. The protein is Phosphoribosylformylglycinamidine cyclo-ligase of Geobacter sp. (strain M21).